A 681-amino-acid chain; its full sequence is Serine/threonine-protein kinase PAK 6 (681 aa).

Disordered stretches follow at residues 1 to 30 (MFRKKKKKRPEISAPQNFQHRVHTSFDPKE), 200 to 256 (QSSP…ESSL), and 268 to 355 (TAAT…PRTW). The 14-residue stretch at 12–25 (ISAPQNFQHRVHTS) folds into the CRIB domain. Residues 26-406 (FDPKEGKFVG…VVDQGDPRLL (381 aa)) are linker. Composition is skewed to low complexity over residues 201-212 (SSPPGASPPTGT) and 268-278 (TAATAPPSSSK). The span at 308–333 (SLPSDQPVGTFSPLTTSDTSSPQKSL) shows a compositional bias: polar residues. Residues 407-658 (LDSYVKIGEG…AQELLDHPFL (252 aa)) form the Protein kinase domain. ATP-binding positions include 413-421 (IGEGSTGIV) and K436. D526 serves as the catalytic Proton acceptor. A Phosphoserine; by autocatalysis modification is found at S560.

It belongs to the protein kinase superfamily. STE Ser/Thr protein kinase family. STE20 subfamily. Interacts tightly with GTP-bound but not GDP-bound CDC42/p21 and RAC1. Interacts with the androgen receptor AR. Interacts with IQGAP1 and PPM1B. In terms of processing, autophosphorylated. Phosphorylated by MAP2K6/MAPKK6, leading to PAK6 activation.

The protein localises to the cytoplasm. The protein resides in the nucleus. It carries out the reaction L-seryl-[protein] + ATP = O-phospho-L-seryl-[protein] + ADP + H(+). The enzyme catalyses L-threonyl-[protein] + ATP = O-phospho-L-threonyl-[protein] + ADP + H(+). Serine/threonine protein kinase that plays a role in the regulation of gene transcription. The kinase activity is induced by various effectors including AR or MAP2K6/MAPKK6. Phosphorylates the DNA-binding domain of androgen receptor/AR and thereby inhibits AR-mediated transcription. Also inhibits ESR1-mediated transcription. May play a role in cytoskeleton regulation by interacting with IQGAP1. May protect cells from apoptosis through phosphorylation of BAD. The sequence is that of Serine/threonine-protein kinase PAK 6 (PAK6) from Pongo abelii (Sumatran orangutan).